The following is a 270-amino-acid chain: Glucosamine-6-phosphate deaminase (270 aa).

Aspartate 68 serves as the catalytic Proton acceptor; for enolization step. Residue aspartate 145 is the For ring-opening step of the active site. Histidine 147 (proton acceptor; for ring-opening step) is an active-site residue. Glutamate 152 acts as the For ring-opening step in catalysis.

The protein belongs to the glucosamine/galactosamine-6-phosphate isomerase family. NagB subfamily.

It catalyses the reaction alpha-D-glucosamine 6-phosphate + H2O = beta-D-fructose 6-phosphate + NH4(+). It participates in amino-sugar metabolism; N-acetylneuraminate degradation; D-fructose 6-phosphate from N-acetylneuraminate: step 5/5. Its function is as follows. Catalyzes the reversible isomerization-deamination of glucosamine 6-phosphate (GlcN6P) to form fructose 6-phosphate (Fru6P) and ammonium ion. This Bifidobacterium longum (strain DJO10A) protein is Glucosamine-6-phosphate deaminase.